A 122-amino-acid chain; its full sequence is MVQQETRLKVADNTGAKEILCIRVMGGSTRRYANIGDVIVATVKEATPGGVVKKGDVVKAVVVRSVKGARRKDGSYIKFDENAAVIIKDDQTPKGTRIFGPVARELRDKKFMKIVSLAPEVL.

The protein belongs to the universal ribosomal protein uL14 family. As to quaternary structure, part of the 50S ribosomal subunit. Forms a cluster with proteins L3 and L19. In the 70S ribosome, L14 and L19 interact and together make contacts with the 16S rRNA in bridges B5 and B8.

Functionally, binds to 23S rRNA. Forms part of two intersubunit bridges in the 70S ribosome. The protein is Large ribosomal subunit protein uL14 of Lachnospira eligens (strain ATCC 27750 / DSM 3376 / VPI C15-48 / C15-B4) (Eubacterium eligens).